A 107-amino-acid polypeptide reads, in one-letter code: Iron-binding protein IscA (107 aa).

The Fe cation site is built by Cys-35, Cys-99, and Cys-101.

The protein belongs to the HesB/IscA family. In terms of assembly, homodimer; may form tetramers and higher multimers. Requires Fe cation as cofactor.

Functionally, is able to transfer iron-sulfur clusters to apo-ferredoxin. Multiple cycles of [2Fe2S] cluster formation and transfer are observed, suggesting that IscA acts catalytically. Recruits intracellular free iron so as to provide iron for the assembly of transient iron-sulfur cluster in IscU in the presence of IscS, L-cysteine and the thioredoxin reductase system TrxA/TrxB. The chain is Iron-binding protein IscA from Photorhabdus laumondii subsp. laumondii (strain DSM 15139 / CIP 105565 / TT01) (Photorhabdus luminescens subsp. laumondii).